Here is a 143-residue protein sequence, read N- to C-terminus: Cytochrome c-type biogenesis protein CcmE (143 aa).

The Cytoplasmic segment spans residues 1 to 8 (MTPVRRRK). Residues 9–29 (LFILLFALSVLSAAAALVLYA) form a helical; Signal-anchor for type II membrane protein membrane-spanning segment. Topologically, residues 30-143 (LRQNISLFYT…KSALADKVKQ (114 aa)) are periplasmic. Residues His-124 and Tyr-128 each contribute to the heme site.

The protein belongs to the CcmE/CycJ family.

The protein localises to the cell inner membrane. Functionally, heme chaperone required for the biogenesis of c-type cytochromes. Transiently binds heme delivered by CcmC and transfers the heme to apo-cytochromes in a process facilitated by CcmF and CcmH. The chain is Cytochrome c-type biogenesis protein CcmE from Legionella pneumophila (strain Lens).